Consider the following 337-residue polypeptide: Holliday junction branch migration complex subunit RuvB (337 aa).

A disordered region spans residues 1–22 (MEDERITSAEVQSPDEENEELS). A large ATPase domain (RuvB-L) region spans residues 1 to 184 (MEDERITSAE…FGIVEHMNYY (184 aa)). Residues Leu-23, Arg-24, Gly-65, Lys-68, Thr-69, Thr-70, 131 to 133 (EDF), Arg-174, Tyr-184, and Arg-221 contribute to the ATP site. Mg(2+) is bound at residue Thr-69. Positions 185-255 (NEADLANIVR…LVSQSLKLLQ (71 aa)) are small ATPAse domain (RuvB-S). Residues 258–337 (NRGLDRTDKK…LGLIDQYMNK (80 aa)) form a head domain (RuvB-H) region. DNA-binding residues include Arg-313 and Arg-318.

The protein belongs to the RuvB family. In terms of assembly, homohexamer. Forms an RuvA(8)-RuvB(12)-Holliday junction (HJ) complex. HJ DNA is sandwiched between 2 RuvA tetramers; dsDNA enters through RuvA and exits via RuvB. An RuvB hexamer assembles on each DNA strand where it exits the tetramer. Each RuvB hexamer is contacted by two RuvA subunits (via domain III) on 2 adjacent RuvB subunits; this complex drives branch migration. In the full resolvosome a probable DNA-RuvA(4)-RuvB(12)-RuvC(2) complex forms which resolves the HJ.

The protein resides in the cytoplasm. It catalyses the reaction ATP + H2O = ADP + phosphate + H(+). In terms of biological role, the RuvA-RuvB-RuvC complex processes Holliday junction (HJ) DNA during genetic recombination and DNA repair, while the RuvA-RuvB complex plays an important role in the rescue of blocked DNA replication forks via replication fork reversal (RFR). RuvA specifically binds to HJ cruciform DNA, conferring on it an open structure. The RuvB hexamer acts as an ATP-dependent pump, pulling dsDNA into and through the RuvAB complex. RuvB forms 2 homohexamers on either side of HJ DNA bound by 1 or 2 RuvA tetramers; 4 subunits per hexamer contact DNA at a time. Coordinated motions by a converter formed by DNA-disengaged RuvB subunits stimulates ATP hydrolysis and nucleotide exchange. Immobilization of the converter enables RuvB to convert the ATP-contained energy into a lever motion, pulling 2 nucleotides of DNA out of the RuvA tetramer per ATP hydrolyzed, thus driving DNA branch migration. The RuvB motors rotate together with the DNA substrate, which together with the progressing nucleotide cycle form the mechanistic basis for DNA recombination by continuous HJ branch migration. Branch migration allows RuvC to scan DNA until it finds its consensus sequence, where it cleaves and resolves cruciform DNA. The chain is Holliday junction branch migration complex subunit RuvB from Pediococcus pentosaceus (strain ATCC 25745 / CCUG 21536 / LMG 10740 / 183-1w).